Reading from the N-terminus, the 254-residue chain is 3-oxo-5-alpha-steroid 4-dehydrogenase 2 (254 aa).

Transmembrane regions (helical) follow at residues 8 to 28, 72 to 92, 146 to 166, and 206 to 226; these read VPVL…LCFG, PRSL…AHYF, FSVG…SDCM, and LATW…FLGM.

The protein belongs to the steroid 5-alpha reductase family.

The protein resides in the microsome membrane. It is found in the endoplasmic reticulum membrane. It catalyses the reaction a 3-oxo-5alpha-steroid + NADP(+) = a 3-oxo-Delta(4)-steroid + NADPH + H(+). The catalysed reaction is 17beta-hydroxy-5alpha-androstan-3-one + NADP(+) = testosterone + NADPH + H(+). The enzyme catalyses 5alpha-pregnane-3,20-dione + NADP(+) = progesterone + NADPH + H(+). Functionally, converts testosterone (T) into 5-alpha-dihydrotestosterone (DHT) and progesterone or corticosterone into their corresponding 5-alpha-3-oxosteroids. It plays a central role in sexual differentiation and androgen physiology. The chain is 3-oxo-5-alpha-steroid 4-dehydrogenase 2 (Srd5a2) from Mus musculus (Mouse).